Reading from the N-terminus, the 251-residue chain is Probable transcriptional regulatory protein RSal33209_2002 (251 aa).

Belongs to the TACO1 family.

The protein localises to the cytoplasm. The protein is Probable transcriptional regulatory protein RSal33209_2002 of Renibacterium salmoninarum (strain ATCC 33209 / DSM 20767 / JCM 11484 / NBRC 15589 / NCIMB 2235).